The sequence spans 452 residues: Cobyrinate a,c-diamide synthase (452 aa).

Residues 246 to 439 (TLAYALDDAF…LHVHFYQDEQ (194 aa)) enclose the GATase cobBQ-type domain. C328 acts as the Nucleophile in catalysis.

Belongs to the CobB/CbiA family. Mg(2+) is required as a cofactor.

It catalyses the reaction cob(II)yrinate + 2 L-glutamine + 2 ATP + 2 H2O = cob(II)yrinate a,c diamide + 2 L-glutamate + 2 ADP + 2 phosphate + 2 H(+). It participates in cofactor biosynthesis; adenosylcobalamin biosynthesis; cob(II)yrinate a,c-diamide from sirohydrochlorin (anaerobic route): step 10/10. Its function is as follows. Catalyzes the ATP-dependent amidation of the two carboxylate groups at positions a and c of cobyrinate, using either L-glutamine or ammonia as the nitrogen source. The polypeptide is Cobyrinate a,c-diamide synthase (Streptococcus sanguinis (strain SK36)).